The following is a 257-amino-acid chain: Probable enoyl-CoA hydratase echA17 (257 aa).

It belongs to the enoyl-CoA hydratase/isomerase family.

The enzyme catalyses a (3S)-3-hydroxyacyl-CoA = a (2E)-enoyl-CoA + H2O. The catalysed reaction is a 4-saturated-(3S)-3-hydroxyacyl-CoA = a (3E)-enoyl-CoA + H2O. Could possibly oxidize fatty acids using specific components. This Mycolicibacterium paratuberculosis (strain ATCC BAA-968 / K-10) (Mycobacterium paratuberculosis) protein is Probable enoyl-CoA hydratase echA17 (echA17).